Reading from the N-terminus, the 553-residue chain is Ergothioneine transport permease/ergothioneine binding protein EgtU (553 aa).

One can recognise an ABC transmembrane type-1 domain in the interval leucine 57–valine 236. 6 helical membrane-spanning segments follow: residues phenylalanine 61–phenylalanine 81, phenylalanine 98–glycine 118, alanine 122–leucine 142, isoleucine 182–leucine 202, valine 219–phenylalanine 239, and valine 261–proline 281. Over arginine 282–leucine 553 the chain is Periplasmic. The tract at residues lysine 288–glutamate 549 is ergothioneine binding domain.

In the N-terminal section; belongs to the binding-protein-dependent transport system permease family. It in the C-terminal section; belongs to the OsmX family. In terms of assembly, the complex is composed of two ATP-binding proteins (EgtV) and two transmembrane proteins (EgtU).

Its subcellular location is the cell inner membrane. Part of the ABC transporter complex EgtUV involved in the uptake of ergothioneine (EGT), a natural low-molecular weight (LMW) thiol antioxidant which protects H.pylori against bleach stress. Responsible for the translocation of the substrate across the membrane. Also contains a C-terminal periplasmic solute-binding domain (SBD) which binds to ergothioneine with low-micromolar affinity. Cannot bind the structurally similar compounds glycine betaine, choline, proline, carnitine or histidine. The chain is Ergothioneine transport permease/ergothioneine binding protein EgtU from Helicobacter pylori (strain G27).